The chain runs to 185 residues: Large ribosomal subunit protein uL5 (185 aa).

This sequence belongs to the universal ribosomal protein uL5 family. As to quaternary structure, part of the 50S ribosomal subunit; part of the 5S rRNA/L5/L18/L25 subcomplex. Contacts the 5S rRNA and the P site tRNA. Forms a bridge to the 30S subunit in the 70S ribosome.

Functionally, this is one of the proteins that bind and probably mediate the attachment of the 5S RNA into the large ribosomal subunit, where it forms part of the central protuberance. In the 70S ribosome it contacts protein S13 of the 30S subunit (bridge B1b), connecting the 2 subunits; this bridge is implicated in subunit movement. Contacts the P site tRNA; the 5S rRNA and some of its associated proteins might help stabilize positioning of ribosome-bound tRNAs. This chain is Large ribosomal subunit protein uL5, found in Protochlamydia amoebophila (strain UWE25).